A 622-amino-acid polypeptide reads, in one-letter code: DNA mismatch repair protein MutL (622 aa).

The protein belongs to the DNA mismatch repair MutL/HexB family.

In terms of biological role, this protein is involved in the repair of mismatches in DNA. It is required for dam-dependent methyl-directed DNA mismatch repair. May act as a 'molecular matchmaker', a protein that promotes the formation of a stable complex between two or more DNA-binding proteins in an ATP-dependent manner without itself being part of a final effector complex. This is DNA mismatch repair protein MutL from Clostridium acetobutylicum (strain ATCC 824 / DSM 792 / JCM 1419 / IAM 19013 / LMG 5710 / NBRC 13948 / NRRL B-527 / VKM B-1787 / 2291 / W).